A 601-amino-acid polypeptide reads, in one-letter code: Alpha-terpineol synthase, chloroplastic (601 aa).

A chloroplast-targeting transit peptide spans 1 to 47 (MSTISIHHVGILRNPLHSKSKRASINKPWSLSLPRSSSASRLVEPCR). Mn(2+) contacts are provided by Asp-357 and Asp-361. A DDXXD motif motif is present at residues 357-361 (DDVYD). 2 homodimerization regions span residues 363-369 (YGTLDEL) and 435-471 (EAEWYQSGYTPSLEEYLTIAKISIGSLPILLSVELSL). Residues Asp-499 and Glu-507 each coordinate Mn(2+).

The protein belongs to the terpene synthase family. In terms of assembly, homodimer. The cofactor is Mn(2+). Mg(2+) is required as a cofactor.

The protein localises to the plastid. It is found in the chloroplast. It carries out the reaction (2E)-geranyl diphosphate + H2O = (S)-alpha-terpineol + diphosphate. The catalysed reaction is (2E)-geranyl diphosphate + H2O = (R)-alpha-terpineol + diphosphate. It participates in secondary metabolite biosynthesis; terpenoid biosynthesis. Its function is as follows. Involved in the biosynthesis of phenolic monoterpenes natural products. Monoterpene synthase which catalyzes the conversion of geranyl diphosphate (GPP) to alpha-terpineol (isomer is not determined). The protein is Alpha-terpineol synthase, chloroplastic of Thymus caespititius (Cretan thyme).